We begin with the raw amino-acid sequence, 405 residues long: Tryptophan synthase beta chain (405 aa).

Position 98 is an N6-(pyridoxal phosphate)lysine (lysine 98).

This sequence belongs to the TrpB family. In terms of assembly, tetramer of two alpha and two beta chains. Requires pyridoxal 5'-phosphate as cofactor.

The enzyme catalyses (1S,2R)-1-C-(indol-3-yl)glycerol 3-phosphate + L-serine = D-glyceraldehyde 3-phosphate + L-tryptophan + H2O. It participates in amino-acid biosynthesis; L-tryptophan biosynthesis; L-tryptophan from chorismate: step 5/5. Its function is as follows. The beta subunit is responsible for the synthesis of L-tryptophan from indole and L-serine. The sequence is that of Tryptophan synthase beta chain from Stenotrophomonas maltophilia (strain K279a).